A 686-amino-acid chain; its full sequence is tRNA wybutosine-synthesizing protein 4 (686 aa).

Residues 1-22 are disordered; sequence MGPRSRQRRTGTVQSTNDSSSL. Residues 10 to 22 are compositionally biased toward polar residues; the sequence is TGTVQSTNDSSSL. S-adenosyl-L-methionine-binding positions include Arg-59, Gly-89, Asp-114, 161–162, and Glu-188; that span reads DL.

It belongs to the methyltransferase superfamily. LCMT family. As to quaternary structure, interacts with RNF144B/IBRDC2.

It carries out the reaction 7-[(3S)-3-amino-3-carboxypropyl]wyosine(37) in tRNA(Phe) + S-adenosyl-L-methionine = 7-[(3S)-(3-amino-3-methoxycarbonyl)propyl]wyosine(37) in tRNA(Phe) + S-adenosyl-L-homocysteine. The catalysed reaction is 7-[(3S)-(3-amino-3-methoxycarbonyl)propyl]wyosine(37) in tRNA(Phe) + S-adenosyl-L-methionine + CO2 = wybutosine(37) in tRNA(Phe) + S-adenosyl-L-homocysteine + 2 H(+). It participates in tRNA modification; wybutosine-tRNA(Phe) biosynthesis. Probable S-adenosyl-L-methionine-dependent methyltransferase that acts as a component of the wybutosine biosynthesis pathway. Wybutosine is a hyper modified guanosine with a tricyclic base found at the 3'-position adjacent to the anticodon of eukaryotic phenylalanine tRNA. May methylate the carboxyl group of leucine residues to form alpha-leucine ester residues. The protein is tRNA wybutosine-synthesizing protein 4 (Lcmt2) of Rattus norvegicus (Rat).